Consider the following 728-residue polypeptide: Catalase-peroxidase 1 (728 aa).

A cross-link (tryptophyl-tyrosyl-methioninium (Trp-Tyr) (with M-244)) is located at residues 91–218 (WHSAGTYRTA…LAAVQMGLIY (128 aa)). His-92 acts as the Proton acceptor in catalysis. The segment at residues 218 to 244 (YVNPEGPDGNPDPVAAAHDIRETFARM) is a cross-link (tryptophyl-tyrosyl-methioninium (Tyr-Met) (with W-91)). His-259 provides a ligand contact to heme b.

It belongs to the peroxidase family. Peroxidase/catalase subfamily. As to quaternary structure, homodimer or homotetramer. It depends on heme b as a cofactor. Formation of the three residue Trp-Tyr-Met cross-link is important for the catalase, but not the peroxidase activity of the enzyme.

It carries out the reaction H2O2 + AH2 = A + 2 H2O. The catalysed reaction is 2 H2O2 = O2 + 2 H2O. In terms of biological role, bifunctional enzyme with both catalase and broad-spectrum peroxidase activity. The protein is Catalase-peroxidase 1 of Burkholderia orbicola (strain MC0-3).